We begin with the raw amino-acid sequence, 569 residues long: Santalene synthase (569 aa).

(2E)-geranyl diphosphate is bound by residues arginine 284, aspartate 321, aspartate 325, and arginine 460. Positions 321 and 325 each coordinate Mg(2+). The DDXXD motif motif lies at 321–325; the sequence is DDGYD. Positions 463, 467, and 471 each coordinate Mg(2+).

The protein belongs to the terpene synthase family. Tpsb subfamily. The cofactor is Mg(2+). Mn(2+) serves as cofactor.

It catalyses the reaction (2E,6E)-farnesyl diphosphate = (1S,5S,6R)-alpha-bergamotene + diphosphate. The catalysed reaction is (2E,6E)-farnesyl diphosphate = (+)-alpha-santalene + diphosphate. The enzyme catalyses (2E,6E)-farnesyl diphosphate = (-)-beta-santalene + diphosphate. Catalyzes a mixture of sesquiterpenoids from (2E,6E)-farnesyl diphosphate in fragrance biosynthesis. Catalyzes the formation of alpha-santalene, beta-santalene, epi-beta-santalene and exo-alpha-bergamotene, as well as traces of alpha-farnesene and beta-farnesene. Also acts with (Z,Z)-farnesyl diphosphate isomer, producing alpha-endo-bergamotene, alpha-santalene, (Z)-beta-farnesene, epi-beta-santalene, and beta-santalene. In Santalum album (White sandalwood), this protein is Santalene synthase.